We begin with the raw amino-acid sequence, 114 residues long: Nucleoid-associated protein Clos_2855 (114 aa).

The protein belongs to the YbaB/EbfC family. Homodimer.

It is found in the cytoplasm. Its subcellular location is the nucleoid. In terms of biological role, binds to DNA and alters its conformation. May be involved in regulation of gene expression, nucleoid organization and DNA protection. The chain is Nucleoid-associated protein Clos_2855 from Alkaliphilus oremlandii (strain OhILAs) (Clostridium oremlandii (strain OhILAs)).